The sequence spans 618 residues: Auxin efflux carrier component 3a (618 aa).

At 1-6 (MISGHD) the chain is on the extracellular side. Residues 7-27 (FYTVMAAVVPLYVAMFLAYGS) form a helical membrane-spanning segment. Residues 28-38 (VRWWGIFTPDQ) are Cytoplasmic-facing. The helical transmembrane segment at 39–59 (CSGINRFVAIFAVPLLSFHFI) threads the bilayer. Val51 provides a ligand contact to (indol-3-yl)acetate. Over 60–70 (STNDPYAMNLR) the chain is Extracellular. A helical membrane pass occupies residues 71–90 (FLAADTLQKLLVLAGLAAWS). At 91–104 (RLPSRTGAPRLDWS) the chain is on the cytoplasmic side. The helical transmembrane segment at 105–125 (ITLFSLSTLPNTLVMGIPLLI) threads the bilayer. Residues Asn115 and Leu117 each contribute to the (indol-3-yl)acetate site. Topologically, residues 126 to 134 (AMYGPYSGS) are extracellular. Residues 135 to 155 (LMVQIVVLQCIIWYTLMLFLF) traverse the membrane as a helical segment. Tyr148 contacts (indol-3-yl)acetate. Topologically, residues 156–478 (EFRAARMLIA…LIRNPNTYSS (323 aa)) are cytoplasmic. Over residues 281–293 (SLQSSRGPTPRQS) the composition is skewed to polar residues. Residues 281–312 (SLQSSRGPTPRQSNFDEHSARPPKPPATTTGA) form a disordered region. A helical transmembrane segment spans residues 479-499 (LLGLAWSLVAFRWHVSMPAIV). Topologically, residues 500 to 502 (EKS) are extracellular. Residues 503–523 (ISILSDAGLGMAMFSLGLFMA) form a helical membrane-spanning segment. Topologically, residues 524-539 (LQPSIIACGKSAAVVS) are cytoplasmic. The chain crosses the membrane as a helical span at residues 540–560 (MAVRFLAGPAVMAAASIAIGL). The Extracellular portion of the chain corresponds to 561 to 563 (RGT). Residues 564-584 (LLHVAIVQAALPQGIVPFVFA) form a helical membrane-spanning segment. (indol-3-yl)acetate is bound by residues Ile578 and Val579. The Cytoplasmic segment spans residues 585–597 (KEYNVHPAILSTA). Residues 598–618 (VIFGMLIALPITLLYYILLGL) traverse the membrane as a helical segment.

Belongs to the auxin efflux carrier (TC 2.A.69.1) family. As to quaternary structure, homodimer. Expressed in coleoptiles, roots, vascular bundles of leaves, shoots, lamina joints and vascular bundles of the lemma and filament. Expressed in stem bases, stems, leaves and young panicles.

The protein localises to the cell membrane. Acts as a component of the auxin efflux carrier. Involved in the polar auxin transport which may regulate crown root development and response to water stress. This chain is Auxin efflux carrier component 3a, found in Oryza sativa subsp. japonica (Rice).